A 316-amino-acid polypeptide reads, in one-letter code: ATP synthase gamma chain (316 aa).

Belongs to the ATPase gamma chain family. In terms of assembly, F-type ATPases have 2 components, CF(1) - the catalytic core - and CF(0) - the membrane proton channel. CF(1) has five subunits: alpha(3), beta(3), gamma(1), delta(1), epsilon(1). CF(0) has three main subunits: a, b and c.

Its subcellular location is the cellular thylakoid membrane. Produces ATP from ADP in the presence of a proton gradient across the membrane. The gamma chain is believed to be important in regulating ATPase activity and the flow of protons through the CF(0) complex. This is ATP synthase gamma chain from Prochlorococcus marinus (strain NATL1A).